Here is a 300-residue protein sequence, read N- to C-terminus: Protoheme IX farnesyltransferase 1 (300 aa).

8 helical membrane passes run 26–46 (VVVL…RAGV), 48–68 (WTVL…AAAV), 97–117 (AALA…LTFT), 120–140 (LTAW…TGFL), 148–168 (IVIG…AATG), 174–194 (PLLL…ALAI), 226–246 (FALL…VLYL), and 280–300 (IYYL…LLNL).

Belongs to the UbiA prenyltransferase family. Protoheme IX farnesyltransferase subfamily.

Its subcellular location is the cell inner membrane. It carries out the reaction heme b + (2E,6E)-farnesyl diphosphate + H2O = Fe(II)-heme o + diphosphate. The protein operates within porphyrin-containing compound metabolism; heme O biosynthesis; heme O from protoheme: step 1/1. Functionally, converts heme B (protoheme IX) to heme O by substitution of the vinyl group on carbon 2 of heme B porphyrin ring with a hydroxyethyl farnesyl side group. This Pseudomonas fluorescens (strain ATCC BAA-477 / NRRL B-23932 / Pf-5) protein is Protoheme IX farnesyltransferase 1.